Reading from the N-terminus, the 227-residue chain is Glutathione S-transferase U17 (227 aa).

The region spanning Ser4 to Gly83 is the GST N-terminal domain. Glutathione contacts are provided by residues Ser14 to Pro15, Ser40 to Lys41, Lys54 to Ile55, and Glu67 to Ser68. Residues Asp90 to Phe222 enclose the GST C-terminal domain.

This sequence belongs to the GST superfamily. Tau family.

It is found in the cytoplasm. It localises to the cytosol. The enzyme catalyses RX + glutathione = an S-substituted glutathione + a halide anion + H(+). Its function is as follows. Involved in light signaling, mainly phyA-mediated photomorphogenesis and in the integration of various phytohormone signals to modulate various aspects of plant development by affecting glutathione pools. In vitro, possesses glutathione S-transferase activity toward 1-chloro-2,4-dinitrobenzene (CDNB) and benzyl isothiocyanate (BITC). The chain is Glutathione S-transferase U17 (GSTU17) from Arabidopsis thaliana (Mouse-ear cress).